The sequence spans 281 residues: 2-dehydro-3-deoxyphosphooctonate aldolase (281 aa).

Belongs to the KdsA family.

It localises to the cytoplasm. It carries out the reaction D-arabinose 5-phosphate + phosphoenolpyruvate + H2O = 3-deoxy-alpha-D-manno-2-octulosonate-8-phosphate + phosphate. It functions in the pathway carbohydrate biosynthesis; 3-deoxy-D-manno-octulosonate biosynthesis; 3-deoxy-D-manno-octulosonate from D-ribulose 5-phosphate: step 2/3. It participates in bacterial outer membrane biogenesis; lipopolysaccharide biosynthesis. This is 2-dehydro-3-deoxyphosphooctonate aldolase from Azotobacter vinelandii (strain DJ / ATCC BAA-1303).